A 217-amino-acid polypeptide reads, in one-letter code: Cysteine-rich protein 3 (217 aa).

Residues 3–64 enclose the LIM zinc-binding 1 domain; that stretch reads WTCPRCQQPV…KPCYGALFGP (62 aa). Residues 84-112 form a disordered region; sequence PGCTTPLSPSSFSPPRPRTGLPQGKKSPP. The LIM zinc-binding 2 domain maps to 122 to 183; it reads SLCPGCGEPV…VPCYGYLFGP (62 aa).

In terms of tissue distribution, expressed in most tissues, but not in skeletal muscle.

It is found in the cytoplasm. This is Cysteine-rich protein 3 (CRIP3) from Homo sapiens (Human).